A 133-amino-acid chain; its full sequence is Small ribosomal subunit protein uS11 (133 aa).

The tract at residues 1-23 is disordered; the sequence is MPPKTRGAVRKPRKKDKKNIALG. Positions 7–17 are enriched in basic residues; that stretch reads GAVRKPRKKDK.

Belongs to the universal ribosomal protein uS11 family. In terms of assembly, part of the 30S ribosomal subunit. Interacts with proteins S7 and S18. Binds to IF-3.

Located on the platform of the 30S subunit, it bridges several disparate RNA helices of the 16S rRNA. Forms part of the Shine-Dalgarno cleft in the 70S ribosome. This chain is Small ribosomal subunit protein uS11, found in Pseudarthrobacter chlorophenolicus (strain ATCC 700700 / DSM 12829 / CIP 107037 / JCM 12360 / KCTC 9906 / NCIMB 13794 / A6) (Arthrobacter chlorophenolicus).